The following is a 394-amino-acid chain: Probable malate--CoA ligase subunit beta (394 aa).

One can recognise an ATP-grasp domain in the interval 9–244 (KELLARHGVH…KSQEDPRETF (236 aa)). 4 residues coordinate ATP: Lys-46, Glu-99, Val-102, and Glu-107. Mg(2+)-binding residues include Asn-199 and Asp-213.

The protein belongs to the succinate/malate CoA ligase beta subunit family. In terms of assembly, heterotetramer of two alpha and two beta subunits. Mg(2+) serves as cofactor.

The enzyme catalyses (S)-malate + ATP + CoA = (S)-malyl-CoA + ADP + phosphate. Its pathway is one-carbon metabolism; formaldehyde assimilation via serine pathway. The protein is Probable malate--CoA ligase subunit beta (mtkA) of Mesorhizobium japonicum (strain LMG 29417 / CECT 9101 / MAFF 303099) (Mesorhizobium loti (strain MAFF 303099)).